Consider the following 323-residue polypeptide: Methionyl-tRNA formyltransferase (323 aa).

Position 117–120 (117–120 (SLLP)) interacts with (6S)-5,6,7,8-tetrahydrofolate.

The protein belongs to the Fmt family.

It catalyses the reaction L-methionyl-tRNA(fMet) + (6R)-10-formyltetrahydrofolate = N-formyl-L-methionyl-tRNA(fMet) + (6S)-5,6,7,8-tetrahydrofolate + H(+). In terms of biological role, attaches a formyl group to the free amino group of methionyl-tRNA(fMet). The formyl group appears to play a dual role in the initiator identity of N-formylmethionyl-tRNA by promoting its recognition by IF2 and preventing the misappropriation of this tRNA by the elongation apparatus. The chain is Methionyl-tRNA formyltransferase from Albidiferax ferrireducens (strain ATCC BAA-621 / DSM 15236 / T118) (Rhodoferax ferrireducens).